We begin with the raw amino-acid sequence, 210 residues long: MTDDTTKNGPDATAADAAADAAAYVENDIAQEEAPQPDALELLKAENGELRDRYLRLAAEMDNLRRRTEREVKDAKSYSVAGFARDMLAVSDNLRRALDAIPAEVKDAADAGLSTLIEGVEMTERAMLSALERHGVRKLEPVGQKFDPNFHQAMFEVPNPDVPNNTVVQVVQAGFSIGERVLRPAMVGVAKGGPKAAEAETNSVFDEKDA.

Belongs to the GrpE family. Homodimer.

It localises to the cytoplasm. In terms of biological role, participates actively in the response to hyperosmotic and heat shock by preventing the aggregation of stress-denatured proteins, in association with DnaK and GrpE. It is the nucleotide exchange factor for DnaK and may function as a thermosensor. Unfolded proteins bind initially to DnaJ; upon interaction with the DnaJ-bound protein, DnaK hydrolyzes its bound ATP, resulting in the formation of a stable complex. GrpE releases ADP from DnaK; ATP binding to DnaK triggers the release of the substrate protein, thus completing the reaction cycle. Several rounds of ATP-dependent interactions between DnaJ, DnaK and GrpE are required for fully efficient folding. The protein is Protein GrpE of Rhizobium leguminosarum bv. trifolii (strain WSM2304).